A 921-amino-acid polypeptide reads, in one-letter code: Guanylate kinase-associated protein mars (921 aa).

The residue at position 49 (serine 49) is a Phosphoserine. Threonine 51 is subject to Phosphothreonine. Serine 76 and serine 170 each carry phosphoserine. Tyrosine 172 is modified (phosphotyrosine). 2 disordered regions span residues 179–208 (GKGK…TVAA) and 273–325 (RPTP…PLGN). Low complexity-rich tracts occupy residues 193-208 (KPTS…TVAA) and 273-285 (RPTP…AKTP). Serine 444 carries the post-translational modification Phosphoserine. The tract at residues 500 to 531 (QTTVKEDTGDSTLVPEGTKTPPRRESNGMPNY) is disordered. Threonine 519 carries the phosphothreonine modification. Serine 554 bears the Phosphoserine mark. 2 disordered regions span residues 641–660 (AGAT…SKPV) and 743–763 (TKVE…RHSS). Phosphoserine occurs at positions 785 and 792. Disordered regions lie at residues 809 to 833 (QNAA…TKRQ) and 861 to 921 (ETVG…SEFM). The residue at position 826 (threonine 826) is a Phosphothreonine. Residues 878 to 907 (EASTESGSLEQNPGRDSNQENEATPRTYTL) show a composition bias toward polar residues.

This sequence belongs to the SAPAP family. In terms of tissue distribution, expressed in the central nervous system and at different stages of gametogenesis. In embryos, it is expressed in central nervous system and brain. In testis, it is strongly expressed in pre-meiotic germ cells, but is not found in somatic or post-meiotic cells.

The protein resides in the cell membrane. It is found in the nucleus. It localises to the nucleoplasm. Its subcellular location is the cytoplasm. The protein localises to the cytoskeleton. The protein resides in the spindle. Cell cycle regulator. The chain is Guanylate kinase-associated protein mars (mars) from Drosophila melanogaster (Fruit fly).